The chain runs to 132 residues: Small ribosomal subunit protein uS11 (132 aa).

Belongs to the universal ribosomal protein uS11 family. As to quaternary structure, part of the 30S ribosomal subunit.

Its function is as follows. Located on the platform of the 30S subunit. In Sulfurisphaera tokodaii (strain DSM 16993 / JCM 10545 / NBRC 100140 / 7) (Sulfolobus tokodaii), this protein is Small ribosomal subunit protein uS11.